A 561-amino-acid chain; its full sequence is Transmembrane protein 209 (561 aa).

2 positions are modified to phosphoserine: Ser9 and Ser11. Residues 28 to 48 (VVLAWGLLNVSMAGMIYTEMT) traverse the membrane as a helical segment. Asn57 carries an N-linked (GlcNAc...) asparagine glycan. A helical transmembrane segment spans residues 60 to 80 (YWPLWYIELALASLFSLNALF). Ser98 is subject to Phosphoserine. Disordered regions lie at residues 120 to 156 (LAAT…KFAT) and 196 to 233 (SLSP…TDKE). Residues 138 to 152 (SVLSYSPSRSPSTSP) show a composition bias toward low complexity. Phosphoserine occurs at positions 201 and 248. The segment at 250–270 (EEKQHRVKLGSPDSTSPSTSP) is disordered. The span at 260–270 (SPDSTSPSTSP) shows a compositional bias: low complexity. Asn274 is a glycosylation site (N-linked (GlcNAc...) asparagine). A Phosphoserine modification is found at Ser278.

In terms of assembly, interacts with NUP205.

The protein resides in the membrane. It localises to the nucleus envelope. It is found in the golgi apparatus. Its subcellular location is the cytoplasm. In terms of biological role, nuclear envelope protein which in association with NUP205, may be involved in nuclear transport of various nuclear proteins in addition to MYC. This is Transmembrane protein 209 (Tmem209) from Rattus norvegicus (Rat).